Reading from the N-terminus, the 251-residue chain is 5'-nucleotidase SurE 1 (251 aa).

Positions 8, 9, 39, and 95 each coordinate a divalent metal cation.

The protein belongs to the SurE nucleotidase family. A divalent metal cation serves as cofactor.

The protein resides in the cytoplasm. It catalyses the reaction a ribonucleoside 5'-phosphate + H2O = a ribonucleoside + phosphate. In terms of biological role, nucleotidase that shows phosphatase activity on nucleoside 5'-monophosphates. This is 5'-nucleotidase SurE 1 from Thermus thermophilus (strain ATCC BAA-163 / DSM 7039 / HB27).